We begin with the raw amino-acid sequence, 180 residues long: Large ribosomal subunit protein uL5 (180 aa).

This sequence belongs to the universal ribosomal protein uL5 family. As to quaternary structure, part of the 50S ribosomal subunit; part of the 5S rRNA/L5/L18/L25 subcomplex. Contacts the 5S rRNA and the P site tRNA. Forms a bridge to the 30S subunit in the 70S ribosome.

In terms of biological role, this is one of the proteins that bind and probably mediate the attachment of the 5S RNA into the large ribosomal subunit, where it forms part of the central protuberance. In the 70S ribosome it contacts protein S13 of the 30S subunit (bridge B1b), connecting the 2 subunits; this bridge is implicated in subunit movement. Contacts the P site tRNA; the 5S rRNA and some of its associated proteins might help stabilize positioning of ribosome-bound tRNAs. This Rubrobacter xylanophilus (strain DSM 9941 / JCM 11954 / NBRC 16129 / PRD-1) protein is Large ribosomal subunit protein uL5.